An 816-amino-acid polypeptide reads, in one-letter code: H(+)/Cl(-) exchange transporter 5 (816 aa).

Residues 1–28 (MAMWQGAMDNRGFQQGSFNSFQSSSSDE) are disordered. Residues 1–124 (MAMWQGAMDN…WALIHSVSDA (124 aa)) lie on the Cytoplasmic side of the membrane. Positions 12–25 (GFQQGSFNSFQSSS) are enriched in low complexity. Helical transmembrane passes span 125 to 162 (FSGW…ICTE) and 208 to 231 (VNYF…VKVF). Positions 237 to 241 (GSGIP) match the Selectivity filter part_1 motif. Residue S238 participates in chloride binding. Residues 240 to 247 (IPEIKTIL) constitute an intramembrane region (helical). 2 helical membrane passes run 256-275 (LGKW…VSSG) and 281-300 (EGPL…HCFN). The Selectivity filter part_2 signature appears at 279 to 283 (GKEGP). 2 consecutive intramembrane regions (helical) follow at residues 312-324 (VLSA…VSVA) and 328-336 (PIGGVLFSL). A run of 5 helical transmembrane segments spans residues 348-366 (LWRS…RSIN), 389-414 (LVPF…IAWC), 422-442 (LGKY…ILAF), 498-518 (MWQL…TFGM), and 523-542 (GLFI…LGVG). The short motif at 523–527 (GLFIP) is the Selectivity filter part_3 element. F525 provides a ligand contact to chloride. Residues 570–584 (GLYAMVGAAACLGGV) constitute an intramembrane region (helical). An intramembrane region (note=Loop between two helices) is located at residues 585 to 587 (TRM). The segment at residues 588–599 (TVSLVVIMFELT) is an intramembrane region (helical). Residues 600–604 (GGLEY) constitute an intramembrane region (note=Loop between two helices). A helical transmembrane segment spans residues 605-622 (IVPLMAAAMTSKWVADAL). The Cytoplasmic portion of the chain corresponds to 623–816 (GREGIYDAHI…NQDPDSILFN (194 aa)). Y628 contacts chloride. 2 consecutive CBS domains span residues 656–720 (MKPR…ARKK) and 752–812 (ILDL…DPDS). Residues T666, 687-689 (YSG), and 794-797 (TKKD) each bind ATP.

Belongs to the chloride channel (TC 2.A.49) family. ClC-5/CLCN5 subfamily. Interacts with NEDD4 and NEDD4L. Post-translationally, ubiquitinated by NEDD4L in the presence of albumin; which promotes endocytosis and proteasomal degradation.

The protein resides in the golgi apparatus membrane. Its subcellular location is the endosome membrane. It is found in the cell membrane. It carries out the reaction 2 chloride(in) + H(+)(out) = 2 chloride(out) + H(+)(in). Proton-coupled chloride transporter. Functions as antiport system and exchanges chloride ions against protons. Important for normal acidification of the endosome lumen. May play an important role in renal tubular function. The CLC channel family contains both chloride channels and proton-coupled anion transporters that exchange chloride or another anion for protons. The absence of conserved gating glutamate residues is typical for family members that function as channels. This is H(+)/Cl(-) exchange transporter 5 (CLCN5) from Sus scrofa (Pig).